A 541-amino-acid chain; its full sequence is Putative transferase YhbX (541 aa).

Over 1-60 (MTVFNKFARSFKSHWLLYLSVIVFGITNLVASSGAHMVQRLLFFVLTILVVKRISSLPLR) the chain is Periplasmic. The chain crosses the membrane as a helical span at residues 61–81 (LLVAAPFVLLTAADMSISLYS). The Cytoplasmic portion of the chain corresponds to 82–110 (WCTFGTTFNDGFAISVLQSDPDEVAKMLG). The chain crosses the membrane as a helical span at residues 111 to 131 (MYSPYLCAFAFLSLLFLAVII). At 132–141 (KYDVSLPTKK) the chain is on the periplasmic side. A helical membrane pass occupies residues 142–162 (VTGILLLIVISGSLFSACQFA). The Cytoplasmic portion of the chain corresponds to 163-264 (YKDAKNKNAF…RKQIKLFNQA (102 aa)). Residues 265–285 (ISGAPYTALSVPLSLTADSVL) traverse the membrane as a helical segment. Residues 286–541 (SHDIHNYPDN…QGNPTPEGQG (256 aa)) are Periplasmic-facing.

Belongs to the phosphoethanolamine transferase family.

It is found in the cell inner membrane. There are several lipid A forms in this strain, including a phosphoethanolamine (1-O-P-pEtN) form; overexpression of this gene does not lead to higher levels of the 1-O-P-pEtN form of lipid A. The protein is Putative transferase YhbX (yhbX) of Escherichia coli O157:H7.